Reading from the N-terminus, the 146-residue chain is Ribosomal RNA large subunit methyltransferase H (146 aa).

S-adenosyl-L-methionine contacts are provided by residues leucine 62, glycine 94, and 113–118 (LGELTL).

It belongs to the RNA methyltransferase RlmH family. As to quaternary structure, homodimer.

The protein resides in the cytoplasm. It carries out the reaction pseudouridine(1915) in 23S rRNA + S-adenosyl-L-methionine = N(3)-methylpseudouridine(1915) in 23S rRNA + S-adenosyl-L-homocysteine + H(+). Specifically methylates the pseudouridine at position 1915 (m3Psi1915) in 23S rRNA. This is Ribosomal RNA large subunit methyltransferase H from Deinococcus radiodurans (strain ATCC 13939 / DSM 20539 / JCM 16871 / CCUG 27074 / LMG 4051 / NBRC 15346 / NCIMB 9279 / VKM B-1422 / R1).